Here is a 550-residue protein sequence, read N- to C-terminus: Arginine--tRNA ligase (550 aa).

Residues 124–134 (ANPTGPLHVGH) carry the 'HIGH' region motif.

The protein belongs to the class-I aminoacyl-tRNA synthetase family. As to quaternary structure, monomer.

It is found in the cytoplasm. It carries out the reaction tRNA(Arg) + L-arginine + ATP = L-arginyl-tRNA(Arg) + AMP + diphosphate. The polypeptide is Arginine--tRNA ligase (Desulfovibrio desulfuricans (strain ATCC 27774 / DSM 6949 / MB)).